Here is a 715-residue protein sequence, read N- to C-terminus: Polyribonucleotide nucleotidyltransferase (715 aa).

The Mg(2+) site is built by D488 and D494. In terms of domain architecture, KH spans 555–614 (PRIEVMHIPTDKIRDVIGTGGKVIREIVEKTGAKINIEDDGTVKIASSNGKEIEAARKWI). Residues 624-692 (GEIYEGTVVK…ERGKVRLSMK (69 aa)) form the S1 motif domain.

The protein belongs to the polyribonucleotide nucleotidyltransferase family. Requires Mg(2+) as cofactor.

It localises to the cytoplasm. The catalysed reaction is RNA(n+1) + phosphate = RNA(n) + a ribonucleoside 5'-diphosphate. In terms of biological role, involved in mRNA degradation. Catalyzes the phosphorolysis of single-stranded polyribonucleotides processively in the 3'- to 5'-direction. This Chelativorans sp. (strain BNC1) protein is Polyribonucleotide nucleotidyltransferase.